Here is a 282-residue protein sequence, read N- to C-terminus: Pantothenate synthetase (282 aa).

An ATP-binding site is contributed by 30–37 (MGNLHEGH). Catalysis depends on H37, which acts as the Proton donor. Residue Q61 participates in (R)-pantoate binding. Beta-alanine is bound at residue Q61. 148–151 (GQKD) is a binding site for ATP. Q154 serves as a coordination point for (R)-pantoate. Residues V177 and 185–188 (LSSR) each bind ATP.

Belongs to the pantothenate synthetase family. As to quaternary structure, homodimer.

It localises to the cytoplasm. The catalysed reaction is (R)-pantoate + beta-alanine + ATP = (R)-pantothenate + AMP + diphosphate + H(+). The protein operates within cofactor biosynthesis; (R)-pantothenate biosynthesis; (R)-pantothenate from (R)-pantoate and beta-alanine: step 1/1. Functionally, catalyzes the condensation of pantoate with beta-alanine in an ATP-dependent reaction via a pantoyl-adenylate intermediate. This chain is Pantothenate synthetase, found in Acinetobacter baumannii (strain AB0057).